We begin with the raw amino-acid sequence, 157 residues long: SsrA-binding protein (157 aa).

Residues 133–157 (LHDKRESEKKRDWGREKGRLLRARG) are disordered. A compositionally biased stretch (basic and acidic residues) spans 135 to 151 (DKRESEKKRDWGREKGR).

It belongs to the SmpB family.

The protein resides in the cytoplasm. Its function is as follows. Required for rescue of stalled ribosomes mediated by trans-translation. Binds to transfer-messenger RNA (tmRNA), required for stable association of tmRNA with ribosomes. tmRNA and SmpB together mimic tRNA shape, replacing the anticodon stem-loop with SmpB. tmRNA is encoded by the ssrA gene; the 2 termini fold to resemble tRNA(Ala) and it encodes a 'tag peptide', a short internal open reading frame. During trans-translation Ala-aminoacylated tmRNA acts like a tRNA, entering the A-site of stalled ribosomes, displacing the stalled mRNA. The ribosome then switches to translate the ORF on the tmRNA; the nascent peptide is terminated with the 'tag peptide' encoded by the tmRNA and targeted for degradation. The ribosome is freed to recommence translation, which seems to be the essential function of trans-translation. This is SsrA-binding protein from Bradyrhizobium sp. (strain ORS 278).